The primary structure comprises 195 residues: Keratin-associated protein 4-11 (195 aa).

27 tandem repeats follow at residues C5–V9, C24–S28, C29–T33, C34–T38, C44–S48, C49–Q53, C54–V58, C59–T63, C64–R68, C69–S73, C74–S78, C79–S83, C84–Q88, C89–M93, C94–T98, C99–R103, C104–S108, C109–S113, C114–S118, C119–Q123, C124–V128, C129–T133, C134–S138, C144–S148, C149–S153, C154–C158, and C159–P163. The 27 X 5 AA repeats of C-C-[GIKRQVHEL]-[SPTR]-[STVQRMC] stretch occupies residues C5–P163.

This sequence belongs to the KRTAP type 4 family. Interacts with hair keratins. In terms of tissue distribution, expressed in the hair follicles.

Functionally, in the hair cortex, hair keratin intermediate filaments are embedded in an interfilamentous matrix, consisting of hair keratin-associated proteins (KRTAP), which are essential for the formation of a rigid and resistant hair shaft through their extensive disulfide bond cross-linking with abundant cysteine residues of hair keratins. The matrix proteins include the high-sulfur and high-glycine-tyrosine keratins. This is Keratin-associated protein 4-11 (KRTAP4-11) from Homo sapiens (Human).